Here is a 91-residue protein sequence, read N- to C-terminus: Small ribosomal subunit protein bS16 (91 aa).

It belongs to the bacterial ribosomal protein bS16 family. Part of the 30S ribosomal subunit.

Functionally, binds to the lower part of the body of the 30S subunit, where it stabilizes two of its domains. This chain is Small ribosomal subunit protein bS16, found in Thermus thermophilus.